We begin with the raw amino-acid sequence, 192 residues long: Crossover junction endodeoxyribonuclease RuvC (192 aa).

Active-site residues include Asp-7, Glu-67, and Asp-140. Mg(2+)-binding residues include Asp-7, Glu-67, and Asp-140. The tract at residues 158-192 (RQSGVPPRTNSRRKSGTGGSWEQFVRQSPNVVVRS) is disordered. Residues 182–192 (VRQSPNVVVRS) show a composition bias toward polar residues.

The protein belongs to the RuvC family. In terms of assembly, homodimer which binds Holliday junction (HJ) DNA. The HJ becomes 2-fold symmetrical on binding to RuvC with unstacked arms; it has a different conformation from HJ DNA in complex with RuvA. In the full resolvosome a probable DNA-RuvA(4)-RuvB(12)-RuvC(2) complex forms which resolves the HJ. Mg(2+) serves as cofactor.

It localises to the cytoplasm. It catalyses the reaction Endonucleolytic cleavage at a junction such as a reciprocal single-stranded crossover between two homologous DNA duplexes (Holliday junction).. The RuvA-RuvB-RuvC complex processes Holliday junction (HJ) DNA during genetic recombination and DNA repair. Endonuclease that resolves HJ intermediates. Cleaves cruciform DNA by making single-stranded nicks across the HJ at symmetrical positions within the homologous arms, yielding a 5'-phosphate and a 3'-hydroxyl group; requires a central core of homology in the junction. The consensus cleavage sequence is 5'-(A/T)TT(C/G)-3'. Cleavage occurs on the 3'-side of the TT dinucleotide at the point of strand exchange. HJ branch migration catalyzed by RuvA-RuvB allows RuvC to scan DNA until it finds its consensus sequence, where it cleaves and resolves the cruciform DNA. This is Crossover junction endodeoxyribonuclease RuvC from Chlorobium chlorochromatii (strain CaD3).